The chain runs to 111 residues: 4'-hydroxy-3'-methoxypropiophenone carrier protein ppsC (111 aa).

Residues 1-21 (MSAQVMRPGTPQHEGQEFLSG) form a disordered region.

It functions in the pathway secondary metabolite biosynthesis. In terms of biological role, 4'-hydroxy-3'-methoxypropiophenone carrier protein; part of the gene cluster that mediates the biosynthesis of 2,4'-dihydroxy-3'-methoxypropiophenone. The first step of the pathway is the conversion of acetate into acetyl-CoA by the acyl-CoA ligase ppsA. Acetyl-CoA is then used as a starter unit by the polyketide synthase ppsB and condensed with 4 malonyl-CoA unit to produce the pentaketide backbone. During polyketide extension, the polykedite chain is probably reduced and dehydrated by the KR and PT domains, respectively. O-methylation seems to be catalyzed by an unknown methyltransferase rather than by the CMeT domain of ppsB. Two hydroxylations and one further decarboxylation step catalyzed by yet unknown enzymes are then required to yield 4'-hydroxy-3'-methoxypropiophenone. PpsC functions as a carrier protein to transport 4'-hydroxy-3'-methoxypropiophenone to a specific cell compartment in which 4'-hydroxy-3'-methoxypropiophenone is hydroxylated to 2,4'-dihydroxy-3'-methoxypropiophenone by a still to be identified enzyme. This Aspergillus oryzae (strain ATCC 42149 / RIB 40) (Yellow koji mold) protein is 4'-hydroxy-3'-methoxypropiophenone carrier protein ppsC.